We begin with the raw amino-acid sequence, 172 residues long: Large ribosomal subunit protein uL10 (172 aa).

The protein belongs to the universal ribosomal protein uL10 family. In terms of assembly, part of the ribosomal stalk of the 50S ribosomal subunit. The N-terminus interacts with L11 and the large rRNA to form the base of the stalk. The C-terminus forms an elongated spine to which L12 dimers bind in a sequential fashion forming a multimeric L10(L12)X complex.

In terms of biological role, forms part of the ribosomal stalk, playing a central role in the interaction of the ribosome with GTP-bound translation factors. This Rhodopseudomonas palustris (strain HaA2) protein is Large ribosomal subunit protein uL10.